A 159-amino-acid chain; its full sequence is UPF0225 protein plu2503 (159 aa).

It belongs to the UPF0225 family.

The sequence is that of UPF0225 protein plu2503 from Photorhabdus laumondii subsp. laumondii (strain DSM 15139 / CIP 105565 / TT01) (Photorhabdus luminescens subsp. laumondii).